The primary structure comprises 1084 residues: Myosin heavy chain, skeletal muscle (1084 aa).

3 disordered regions span residues 1–20 (SAET…KTKE), 270–292 (EIEA…SREL), and 298–317 (RLEE…KKRE). Positions 1-258 (SAETEKEMAN…SKIEDEQALM (258 aa)) are alpha-helical tailpiece (S2). The tract at residues 259 to 1084 (TNLQRIEELE…DVHSKVISEE (826 aa)) is rodlike tail (S2 and LMM domains). The span at 273 to 292 (AERASRAKAEKQRSDLSREL) shows a compositional bias: basic and acidic residues. Positions 455-1084 (QAFTQQIEGL…DVHSKVISEE (630 aa)) form a coiled coil.

Muscle myosin is a hexameric protein that consists of 2 heavy chain subunits (MHC), 2 alkali light chain subunits (MLC) and 2 regulatory light chain subunits (MLC-2).

It is found in the cytoplasm. Its subcellular location is the myofibril. Functionally, muscle contraction. This Oryctolagus cuniculus (Rabbit) protein is Myosin heavy chain, skeletal muscle.